A 130-amino-acid chain; its full sequence is ATP synthase epsilon chain (130 aa).

Belongs to the ATPase epsilon chain family. In terms of assembly, F-type ATPases have 2 components, CF(1) - the catalytic core - and CF(0) - the membrane proton channel. CF(1) has five subunits: alpha(3), beta(3), gamma(1), delta(1), epsilon(1). CF(0) has three main subunits: a, b and c.

Its subcellular location is the cell inner membrane. Functionally, produces ATP from ADP in the presence of a proton gradient across the membrane. The polypeptide is ATP synthase epsilon chain (Pelagibacter ubique (strain HTCC1062)).